The primary structure comprises 343 residues: Hydroxymethylglutaryl-CoA synthase (343 aa).

(3S)-3-hydroxy-3-methylglutaryl-CoA contacts are provided by Asp28 and Ala29. Glu80 (proton donor/acceptor) is an active-site residue. Cys112 serves as a coordination point for (3S)-3-hydroxy-3-methylglutaryl-CoA. Cys112 serves as the catalytic Acyl-thioester intermediate. Arg198 contacts CoA. Positions 200 and 233 each coordinate (3S)-3-hydroxy-3-methylglutaryl-CoA. His233 functions as the Proton donor/acceptor in the catalytic mechanism. Lys238 is a binding site for CoA. The (3S)-3-hydroxy-3-methylglutaryl-CoA site is built by Arg242, Asn265, and Ser295.

Belongs to the thiolase-like superfamily. Archaeal HMG-CoA synthase family. As to quaternary structure, interacts with acetoacetyl-CoA thiolase that catalyzes the precedent step in the pathway and with a DUF35 protein. The acetoacetyl-CoA thiolase/HMG-CoA synthase complex channels the intermediate via a fused CoA-binding site, which allows for efficient coupling of the endergonic thiolase reaction with the exergonic HMGCS reaction.

The catalysed reaction is acetoacetyl-CoA + acetyl-CoA + H2O = (3S)-3-hydroxy-3-methylglutaryl-CoA + CoA + H(+). It functions in the pathway metabolic intermediate biosynthesis; (R)-mevalonate biosynthesis; (R)-mevalonate from acetyl-CoA: step 2/3. Functionally, catalyzes the condensation of acetyl-CoA with acetoacetyl-CoA to form 3-hydroxy-3-methylglutaryl-CoA (HMG-CoA). Functions in the mevalonate (MVA) pathway leading to isopentenyl diphosphate (IPP), a key precursor for the biosynthesis of isoprenoid compounds that are building blocks of archaeal membrane lipids. The protein is Hydroxymethylglutaryl-CoA synthase of Archaeoglobus fulgidus (strain ATCC 49558 / DSM 4304 / JCM 9628 / NBRC 100126 / VC-16).